The sequence spans 880 residues: Alanine--tRNA ligase (880 aa).

Residues His567, His571, Cys669, and His673 each contribute to the Zn(2+) site.

The protein belongs to the class-II aminoacyl-tRNA synthetase family. It depends on Zn(2+) as a cofactor.

The protein localises to the cytoplasm. It catalyses the reaction tRNA(Ala) + L-alanine + ATP = L-alanyl-tRNA(Ala) + AMP + diphosphate. Its function is as follows. Catalyzes the attachment of alanine to tRNA(Ala) in a two-step reaction: alanine is first activated by ATP to form Ala-AMP and then transferred to the acceptor end of tRNA(Ala). Also edits incorrectly charged Ser-tRNA(Ala) and Gly-tRNA(Ala) via its editing domain. This Bacillus cytotoxicus (strain DSM 22905 / CIP 110041 / 391-98 / NVH 391-98) protein is Alanine--tRNA ligase.